A 220-amino-acid chain; its full sequence is Dual specificity phosphatase 29 (220 aa).

The 149-residue stretch at 54–202 folds into the Tyrosine-protein phosphatase domain; it reads HVNEVWPKLY…LRELDKQLVQ (149 aa). Residue 146 to 153 coordinates substrate; sequence HCVMGRSR. The Phosphocysteine intermediate role is filled by Cys-147.

This sequence belongs to the protein-tyrosine phosphatase family. Non-receptor class dual specificity subfamily. Homodimer. Interacts with PRKAA2.

The protein localises to the cytoplasm. It is found in the nucleus. It carries out the reaction O-phospho-L-tyrosyl-[protein] + H2O = L-tyrosyl-[protein] + phosphate. The enzyme catalyses O-phospho-L-seryl-[protein] + H2O = L-seryl-[protein] + phosphate. The catalysed reaction is O-phospho-L-threonyl-[protein] + H2O = L-threonyl-[protein] + phosphate. Its function is as follows. Dual specificity phosphatase able to dephosphorylate phosphotyrosine, phosphoserine and phosphothreonine residues within the same substrate, with a preference for phosphotyrosine as a substrate. Involved in the modulation of intracellular signaling cascades. In skeletal muscle regulates systemic glucose homeostasis by activating, AMPK, an energy sensor protein kinase. Affects MAP kinase signaling though modulation of the ERK1/2 cascade in skeletal muscle promoting muscle cell differentiation, development and atrophy. This is Dual specificity phosphatase 29 (DUSP29) from Pan troglodytes (Chimpanzee).